Reading from the N-terminus, the 394-residue chain is MSKEKFERTKPHVNVGTIGHVDHGKTTLTAAICTVLSKVYGGTARDFASIDNAPEERERGITISTSHVEYDTPSRHYAHVDCPGHADYVKNMITGAAQMDGGILVVAATDGPMPQTREHILLGRQVGIPYIIVFMNKCDMVDDEELLELVEMEVRELLSEYDFPGDDLPVIQGSALGALNGEEQWEAKIVELAEALDSYIPEPERAVDMPFLMPIEDVFSIQGRGTVVTGRIERGILKVGDEVAIVGIKDTTTTTCTGVEMFRKLLDEGRAGENVGALLRGTKRDEVERGQVLAKPGSITPHTKFESEVYVLSKDEGGRHTPFFKGYRPQFYFRTTDVTGDISLPEGVEMVMPGDNIQMVVELISPIAMDEGLRFAIREGGRTVGAGVVAKIFA.

In terms of domain architecture, tr-type G spans 10-204 (KPHVNVGTIG…ALDSYIPEPE (195 aa)). The segment at 19–26 (GHVDHGKT) is G1. 19–26 (GHVDHGKT) lines the GTP pocket. Residue Thr26 coordinates Mg(2+). The tract at residues 60-64 (GITIS) is G2. The G3 stretch occupies residues 81-84 (DCPG). GTP-binding positions include 81-85 (DCPGH) and 136-139 (NKCD). The interval 136–139 (NKCD) is G4. Residues 174-176 (SAL) are G5.

This sequence belongs to the TRAFAC class translation factor GTPase superfamily. Classic translation factor GTPase family. EF-Tu/EF-1A subfamily. In terms of assembly, monomer.

It localises to the cytoplasm. The enzyme catalyses GTP + H2O = GDP + phosphate + H(+). In terms of biological role, GTP hydrolase that promotes the GTP-dependent binding of aminoacyl-tRNA to the A-site of ribosomes during protein biosynthesis. The sequence is that of Elongation factor Tu 1 from Vibrio vulnificus (strain YJ016).